A 197-amino-acid chain; its full sequence is Syndecan-4 (197 aa).

Residues 1-19 form the signal peptide; sequence MPLPRAAFLLGLLLAAAAA. The Extracellular portion of the chain corresponds to 20 to 147; the sequence is ESVRETETMD…SIFERTEVLT (128 aa). Ser-38, Ser-65, and Ser-67 each carry an O-linked (Xyl...) (glycosaminoglycan) serine glycan. N-linked (GlcNAc...) asparagine glycosylation is found at Asn-124 and Asn-136. The helical transmembrane segment at 148-168 threads the bilayer; it reads ALIAGGAVGLLFAVFLILLLV. The Cytoplasmic segment spans residues 169-197; that stretch reads YRMKKKDEGSYDLGKKPIYKKAPTNEFYA.

The protein belongs to the syndecan proteoglycan family. Interacts with SDOS. In terms of processing, O-glycosylated; contains both chondroitin sulfate and heparan sulfate. Ser-38, Ser-65 and Ser-67 can all be modified by either chondroitin sulfate or heparan sulfate, and the protein exists in forms that contain only chondroitin sulfate, only heparan sulfate and both chondroitin sulfate and heparan sulfate.

The protein resides in the membrane. Functionally, cell surface proteoglycan which regulates exosome biogenesis in concert with SDCBP and PDCD6IP. The sequence is that of Syndecan-4 (SDC4) from Gallus gallus (Chicken).